The chain runs to 515 residues: Maturase K (515 aa).

This sequence belongs to the intron maturase 2 family. MatK subfamily.

It is found in the plastid. The protein localises to the chloroplast. Usually encoded in the trnK tRNA gene intron. Probably assists in splicing its own and other chloroplast group II introns. The protein is Maturase K of Picea pungens (Colorado spruce).